We begin with the raw amino-acid sequence, 253 residues long: Ubiquinone/menaquinone biosynthesis C-methyltransferase UbiE (253 aa).

S-adenosyl-L-methionine-binding positions include threonine 76, aspartate 97, and 125-126 (NA).

The protein belongs to the class I-like SAM-binding methyltransferase superfamily. MenG/UbiE family.

It carries out the reaction a 2-demethylmenaquinol + S-adenosyl-L-methionine = a menaquinol + S-adenosyl-L-homocysteine + H(+). It catalyses the reaction a 2-methoxy-6-(all-trans-polyprenyl)benzene-1,4-diol + S-adenosyl-L-methionine = a 5-methoxy-2-methyl-3-(all-trans-polyprenyl)benzene-1,4-diol + S-adenosyl-L-homocysteine + H(+). The protein operates within quinol/quinone metabolism; menaquinone biosynthesis; menaquinol from 1,4-dihydroxy-2-naphthoate: step 2/2. It participates in cofactor biosynthesis; ubiquinone biosynthesis. In terms of biological role, methyltransferase required for the conversion of demethylmenaquinol (DMKH2) to menaquinol (MKH2) and the conversion of 2-polyprenyl-6-methoxy-1,4-benzoquinol (DDMQH2) to 2-polyprenyl-3-methyl-6-methoxy-1,4-benzoquinol (DMQH2). The chain is Ubiquinone/menaquinone biosynthesis C-methyltransferase UbiE from Rhodopseudomonas palustris (strain BisB5).